We begin with the raw amino-acid sequence, 37 residues long: uncharacterized protein (37 aa).

This is an uncharacterized protein from Saccharomyces cerevisiae (strain ATCC 204508 / S288c) (Baker's yeast).